An 88-amino-acid chain; its full sequence is U24 protein (88 aa).

Position 6 is a phosphothreonine (T6). Positions 8–11 (PPSY) match the PPXY motif motif. A helical membrane pass occupies residues 58 to 78 (FAFLVLTGLAIAMILFIAFVI).

In terms of assembly, interacts with host ITCH; this interaction probably mediates ITCH degradation. Interacts probably with NEDD4.

It is found in the membrane. In terms of biological role, down-regulates the TCR/CD3E complex and the transferrin receptor TFRC in host T-cells by blocking them from recycling back to the cell surface. In Human herpesvirus 6B (strain Z29) (HHV-6 variant B), this protein is U24 protein (U24).